Here is a 428-residue protein sequence, read N- to C-terminus: D-amino acid dehydrogenase (428 aa).

An FAD-binding site is contributed by 3–17; it reads VVILGSGVVGVASAY.

This sequence belongs to the DadA oxidoreductase family. Requires FAD as cofactor.

It carries out the reaction a D-alpha-amino acid + A + H2O = a 2-oxocarboxylate + AH2 + NH4(+). Its pathway is amino-acid degradation; D-alanine degradation; NH(3) and pyruvate from D-alanine: step 1/1. Its function is as follows. Oxidative deamination of D-amino acids. This Burkholderia multivorans (strain ATCC 17616 / 249) protein is D-amino acid dehydrogenase.